The sequence spans 428 residues: Elongation factor 1-alpha (428 aa).

The 211-residue stretch at lysine 5–lysine 215 folds into the tr-type G domain. The G1 stretch occupies residues glycine 14–serine 21. Residue glycine 14–serine 21 participates in GTP binding. Serine 21 contributes to the Mg(2+) binding site. Residues glycine 68 to aspartate 72 form a G2 region. A G3 region spans residues aspartate 89–glycine 92. Residues aspartate 89–histidine 93 and asparagine 144–aspartate 147 contribute to the GTP site. The G4 stretch occupies residues asparagine 144–aspartate 147. Residues serine 181–tryptophan 183 form a G5 region.

Belongs to the TRAFAC class translation factor GTPase superfamily. Classic translation factor GTPase family. EF-Tu/EF-1A subfamily.

It is found in the cytoplasm. The enzyme catalyses GTP + H2O = GDP + phosphate + H(+). Functionally, GTP hydrolase that promotes the GTP-dependent binding of aminoacyl-tRNA to the A-site of ribosomes during protein biosynthesis. The sequence is that of Elongation factor 1-alpha from Thermococcus celer.